Reading from the N-terminus, the 215-residue chain is Glycerol-3-phosphate acyltransferase (215 aa).

6 helical membrane-spanning segments follow: residues 3–23 (LILLILTAYLLGSIPTGLWIG), 42–61 (TNTFRILGLKAGAATLLIDI), 68–90 (TLLPVLVGASNISPITIGFFAVL), 110–130 (AGVLLGFAPLYLLFLAAVFVL), 134–154 (LFSMISLASLTASVVAVISVL), and 162–182 (LLPSYDWLLTITIVVLAAIII).

The protein belongs to the PlsY family. Probably interacts with PlsX.

It localises to the cell membrane. It carries out the reaction an acyl phosphate + sn-glycerol 3-phosphate = a 1-acyl-sn-glycero-3-phosphate + phosphate. It participates in lipid metabolism; phospholipid metabolism. Catalyzes the transfer of an acyl group from acyl-phosphate (acyl-PO(4)) to glycerol-3-phosphate (G3P) to form lysophosphatidic acid (LPA). This enzyme utilizes acyl-phosphate as fatty acyl donor, but not acyl-CoA or acyl-ACP. This Streptococcus equi subsp. equi (strain 4047) protein is Glycerol-3-phosphate acyltransferase.